A 319-amino-acid polypeptide reads, in one-letter code: Protein SODIUM POTASSIUM ROOT DEFECTIVE 1 (319 aa).

The segment covering 1 to 13 (MLCASQASTTTLC) has biased composition (polar residues). 2 disordered regions span residues 1–113 (MLCA…TPQG) and 191–248 (SPDN…NSSS). Residues 14–27 (STMDQTSQPSSSSS) are compositionally biased toward low complexity. Residues 36-49 (AIDRHNPIIRDGRR) are compositionally biased toward basic and acidic residues. Residues 58–67 (LNPSSSSSST) show a composition bias toward low complexity. Composition is skewed to polar residues over residues 104–113 (SCFSSDTPQG) and 200–210 (TKASPTASLSS). A compositionally biased stretch (pro residues) spans 224–242 (SPPPPPPPSPPQSSPPSPP). Positions 249-315 (DQVVVLRVSL…KVKNAQFWPE (67 aa)) constitute an HMA domain. The Zn(2+) site is built by Cys260 and Cys263.

As to quaternary structure, interacts with FT, but not with TSF (TWIN SISTER OF FT). Expressed in vascular tissues of cotyledons, rosette leaves and roots in developing seedlings before and during the floral transition. Expressed specifically in the phloem companion cells. Not detected in embryos or seeds. Not detected in the vegetative shoot apex.

It is found in the cytoplasm. The protein localises to the nucleus. Its subcellular location is the endoplasmic reticulum. In terms of biological role, required for root meristem maintenance after germination. Involved in phloem translocation, starch accumulation and flowering. Promotes flowering in the photoperiod pathway. Regulates long-distance movement of FT from leaves to the shoot apex through the phloem stream. The protein is Protein SODIUM POTASSIUM ROOT DEFECTIVE 1 of Arabidopsis thaliana (Mouse-ear cress).